A 255-amino-acid chain; its full sequence is NAD kinase (255 aa).

Aspartate 44 (proton acceptor) is an active-site residue. Residues 44 to 45 (DG), histidine 49, 114 to 115 (NE), aspartate 144, alanine 152, 155 to 160 (SAYNLS), and glutamine 216 contribute to the NAD(+) site.

Belongs to the NAD kinase family. It depends on a divalent metal cation as a cofactor.

The protein resides in the cytoplasm. It catalyses the reaction NAD(+) + ATP = ADP + NADP(+) + H(+). Functionally, involved in the regulation of the intracellular balance of NAD and NADP, and is a key enzyme in the biosynthesis of NADP. Catalyzes specifically the phosphorylation on 2'-hydroxyl of the adenosine moiety of NAD to yield NADP. The sequence is that of NAD kinase from Rickettsia canadensis (strain McKiel).